The primary structure comprises 327 residues: Spermidine/putrescine import ATP-binding protein PotA (327 aa).

The ABC transporter domain maps to 5-235 (IKVEAVEKHF…PKTLFVATFI (231 aa)). 37–44 (GPSGCGKT) contributes to the ATP binding site.

It belongs to the ABC transporter superfamily. Spermidine/putrescine importer (TC 3.A.1.11.1) family. In terms of assembly, the complex is composed of two ATP-binding proteins (PotA), two transmembrane proteins (PotB and PotC) and a solute-binding protein (PotD).

It localises to the cell membrane. The catalysed reaction is ATP + H2O + polyamine-[polyamine-binding protein]Side 1 = ADP + phosphate + polyamineSide 2 + [polyamine-binding protein]Side 1.. Part of the ABC transporter complex PotABCD involved in spermidine/putrescine import. Responsible for energy coupling to the transport system. This is Spermidine/putrescine import ATP-binding protein PotA from Bacillus cereus (strain ATCC 14579 / DSM 31 / CCUG 7414 / JCM 2152 / NBRC 15305 / NCIMB 9373 / NCTC 2599 / NRRL B-3711).